The following is a 99-amino-acid chain: Acylphosphatase (99 aa).

An Acylphosphatase-like domain is found at 5–97 (VRQVTVQGRV…RPGERFSTLP (93 aa)). Residues Arg-20 and Asn-38 contribute to the active site.

This sequence belongs to the acylphosphatase family.

It catalyses the reaction an acyl phosphate + H2O = a carboxylate + phosphate + H(+). The polypeptide is Acylphosphatase (acyP) (Rhodopseudomonas palustris (strain BisB18)).